The primary structure comprises 258 residues: Global transcriptional regulator CodY (258 aa).

Residues 1–156 are GAF domain; the sequence is MSSLLTKTRM…SATIVGMEML (156 aa). The H-T-H motif DNA-binding region spans 204-223; the sequence is ASKIADKVGITRSVIVNALR.

It belongs to the CodY family.

Its subcellular location is the cytoplasm. Its function is as follows. DNA-binding global transcriptional regulator which is involved in the adaptive response to starvation and acts by directly or indirectly controlling the expression of numerous genes in response to nutrient availability. During rapid exponential growth, CodY is highly active and represses genes whose products allow adaptation to nutrient depletion. In Clostridium beijerinckii (strain ATCC 51743 / NCIMB 8052) (Clostridium acetobutylicum), this protein is Global transcriptional regulator CodY.